Consider the following 290-residue polypeptide: HTH-type transcriptional regulator BsdA (290 aa).

The HTH lysR-type domain occupies 1 to 59 (MDIRQLRYFITIAQEQKITSAAKKLHMAQPPLSRQLKQLEDELGVVLFDRNKKKQMTLT). Residues 18 to 37 (ITSAAKKLHMAQPPLSRQLK) constitute a DNA-binding region (H-T-H motif).

The protein belongs to the LysR transcriptional regulatory family.

Could be a positive regulator of bsdBCD expression in response to salicylic acid. In Bacillus subtilis (strain 168), this protein is HTH-type transcriptional regulator BsdA (bsdA).